We begin with the raw amino-acid sequence, 279 residues long: MFGPRDSRVRGWFLLDSYLPTFTLTIVYLLSIWLGNKYMKNRPALSLRGILTLYNLGITLLSAYMLVELVLSSWEGGYNLQCQNLDSAGEGDIRVAKVLWWYYFSKLVEFLDTIFFVLRKKTSQITFLHVYHHASMFNIWWCVLNWIPCGQSFFGPTLNSFIHILMYSYYGLSVFPSMHRYLWWKKYLTQAQLVQFVLTITHTLSAVVKPCGFPFGCLIFQSSYMMTLVILFLNFYIQTYRKKPMKKEMPEGAAGKEVKNGFPKAHSIAANGVTDKKVQ.

The next 7 membrane-spanning stretches (helical) occupy residues 12–32, 50–70, 98–118, 136–156, 158–178, 188–208, and 213–233; these read WFLLDSYLPTFTLTIVYLLSI, ILTLYNLGITLLSAYMLVELV, VLWWYYFSKLVEFLDTIFFVL, MFNIWWCVLNWIPCGQSFFGP, LNSFIHILMYSYYGLSVFPSM, LTQAQLVQFVLTITHTLSAVV, and FPFGCLIFQSSYMMTLVILFL. The short motif at 276 to 279 is the Di-lysine motif element; that stretch reads KKVQ.

The protein belongs to the ELO family. ELOVL2 subfamily. As to quaternary structure, interacts with TECR.

It is found in the endoplasmic reticulum membrane. The catalysed reaction is a very-long-chain acyl-CoA + malonyl-CoA + H(+) = a very-long-chain 3-oxoacyl-CoA + CO2 + CoA. The enzyme catalyses (7Z,10Z,13Z,16Z,19Z)-docosapentaenoyl-CoA + malonyl-CoA + H(+) = (9Z,12Z,15Z,18Z,21Z)-3-oxotetracosapentaenoyl-CoA + CO2 + CoA. It carries out the reaction (5Z,8Z,11Z,14Z,17Z)-eicosapentaenoyl-CoA + malonyl-CoA + H(+) = 3-oxo-(7Z,10Z,13Z,16Z,19Z)-docosapentaenoyl-CoA + CO2 + CoA. It catalyses the reaction (5Z,8Z,11Z,14Z)-eicosatetraenoyl-CoA + malonyl-CoA + H(+) = (7Z,10Z,13Z,16Z)-3-oxodocosatetraenoyl-CoA + CO2 + CoA. The catalysed reaction is (7Z,10Z,13Z,16Z)-docosatetraenoyl-CoA + malonyl-CoA + H(+) = (9Z,12Z,15Z,18Z)-3-oxotetracosatetraenoyl-CoA + CO2 + CoA. It participates in lipid metabolism; polyunsaturated fatty acid biosynthesis. Its function is as follows. Catalyzes the first and rate-limiting reaction of the four reactions that constitute the long-chain fatty acids elongation cycle. This endoplasmic reticulum-bound enzymatic process allows the addition of 2 carbons to the chain of long- and very long-chain fatty acids (VLCFAs) per cycle. Condensing enzyme that catalyzes the synthesis of polyunsaturated very long chain fatty acid (C20- and C22-PUFA), acting specifically toward polyunsaturated acyl-CoA with the higher activity toward C20:4(n-6) acyl-CoA. May participate in the production of polyunsaturated VLCFAs of different chain lengths that are involved in multiple biological processes as precursors of membrane lipids and lipid mediators. The chain is Very long chain fatty acid elongase 2 from Rattus norvegicus (Rat).